The sequence spans 317 residues: tRNA-cytidine(32) 2-sulfurtransferase (317 aa).

A PP-loop motif motif is present at residues 46-51 (SGGKDS). Positions 121, 124, and 212 each coordinate [4Fe-4S] cluster.

The protein belongs to the TtcA family. As to quaternary structure, homodimer. Mg(2+) serves as cofactor. [4Fe-4S] cluster is required as a cofactor.

It localises to the cytoplasm. The catalysed reaction is cytidine(32) in tRNA + S-sulfanyl-L-cysteinyl-[cysteine desulfurase] + AH2 + ATP = 2-thiocytidine(32) in tRNA + L-cysteinyl-[cysteine desulfurase] + A + AMP + diphosphate + H(+). It participates in tRNA modification. In terms of biological role, catalyzes the ATP-dependent 2-thiolation of cytidine in position 32 of tRNA, to form 2-thiocytidine (s(2)C32). The sulfur atoms are provided by the cysteine/cysteine desulfurase (IscS) system. In Shewanella loihica (strain ATCC BAA-1088 / PV-4), this protein is tRNA-cytidine(32) 2-sulfurtransferase.